Reading from the N-terminus, the 419-residue chain is Serine hydroxymethyltransferase (419 aa).

(6S)-5,6,7,8-tetrahydrofolate-binding positions include Leu-121 and 125–127 (GHL). Lys-230 is subject to N6-(pyridoxal phosphate)lysine.

Belongs to the SHMT family. Homodimer. Pyridoxal 5'-phosphate serves as cofactor.

The protein resides in the cytoplasm. The catalysed reaction is (6R)-5,10-methylene-5,6,7,8-tetrahydrofolate + glycine + H2O = (6S)-5,6,7,8-tetrahydrofolate + L-serine. It participates in one-carbon metabolism; tetrahydrofolate interconversion. The protein operates within amino-acid biosynthesis; glycine biosynthesis; glycine from L-serine: step 1/1. Its function is as follows. Catalyzes the reversible interconversion of serine and glycine with tetrahydrofolate (THF) serving as the one-carbon carrier. This reaction serves as the major source of one-carbon groups required for the biosynthesis of purines, thymidylate, methionine, and other important biomolecules. Also exhibits THF-independent aldolase activity toward beta-hydroxyamino acids, producing glycine and aldehydes, via a retro-aldol mechanism. The polypeptide is Serine hydroxymethyltransferase (Vesicomyosocius okutanii subsp. Calyptogena okutanii (strain HA)).